The following is a 235-amino-acid chain: Sugar fermentation stimulation protein homolog (235 aa).

The protein belongs to the SfsA family.

The sequence is that of Sugar fermentation stimulation protein homolog from Serratia proteamaculans (strain 568).